The following is a 1052-amino-acid chain: Kruppel-like factor 18 (1052 aa).

3 C2H2-type zinc fingers span residues 964–988, 994–1018, and 1024–1046; these read YVCT…MRKH, YVCD…KKRH, and YLCS…AKVH.

Belongs to the krueppel C2H2-type zinc-finger protein family.

It is found in the nucleus. This Homo sapiens (Human) protein is Kruppel-like factor 18.